Here is a 190-residue protein sequence, read N- to C-terminus: Sec-independent protein translocase protein TatB (190 aa).

The chain crosses the membrane as a helical span at residues L2 to G22. Residues I130 to S190 form a disordered region. The span at P134–A144 shows a compositional bias: basic residues. Over residues A145–A163 the composition is skewed to low complexity.

This sequence belongs to the TatB family. As to quaternary structure, the Tat system comprises two distinct complexes: a TatABC complex, containing multiple copies of TatA, TatB and TatC subunits, and a separate TatA complex, containing only TatA subunits. Substrates initially bind to the TatABC complex, which probably triggers association of the separate TatA complex to form the active translocon.

The protein resides in the cell inner membrane. Part of the twin-arginine translocation (Tat) system that transports large folded proteins containing a characteristic twin-arginine motif in their signal peptide across membranes. Together with TatC, TatB is part of a receptor directly interacting with Tat signal peptides. TatB may form an oligomeric binding site that transiently accommodates folded Tat precursor proteins before their translocation. The polypeptide is Sec-independent protein translocase protein TatB (Caulobacter sp. (strain K31)).